Consider the following 564-residue polypeptide: 2-succinyl-5-enolpyruvyl-6-hydroxy-3-cyclohexene-1-carboxylate synthase (564 aa).

The protein belongs to the TPP enzyme family. MenD subfamily. As to quaternary structure, homodimer. The cofactor is Mg(2+). Mn(2+) is required as a cofactor. Requires thiamine diphosphate as cofactor.

It catalyses the reaction isochorismate + 2-oxoglutarate + H(+) = 5-enolpyruvoyl-6-hydroxy-2-succinyl-cyclohex-3-ene-1-carboxylate + CO2. Its pathway is quinol/quinone metabolism; 1,4-dihydroxy-2-naphthoate biosynthesis; 1,4-dihydroxy-2-naphthoate from chorismate: step 2/7. It participates in quinol/quinone metabolism; menaquinone biosynthesis. In terms of biological role, catalyzes the thiamine diphosphate-dependent decarboxylation of 2-oxoglutarate and the subsequent addition of the resulting succinic semialdehyde-thiamine pyrophosphate anion to isochorismate to yield 2-succinyl-5-enolpyruvyl-6-hydroxy-3-cyclohexene-1-carboxylate (SEPHCHC). The protein is 2-succinyl-5-enolpyruvyl-6-hydroxy-3-cyclohexene-1-carboxylate synthase of Vibrio vulnificus (strain CMCP6).